The primary structure comprises 451 residues: Coproporphyrinogen III oxidase (451 aa).

Residues 10 to 15 (GGGISG), 36 to 37 (DP), 58 to 61 (GAEA), valine 242, tryptophan 393, and 429 to 431 (IGV) each bind FAD.

Belongs to the protoporphyrinogen/coproporphyrinogen oxidase family. Coproporphyrinogen III oxidase subfamily. It depends on FAD as a cofactor.

It is found in the cytoplasm. It catalyses the reaction coproporphyrinogen III + 3 O2 = coproporphyrin III + 3 H2O2. Its pathway is porphyrin-containing compound metabolism; protoheme biosynthesis. Functionally, involved in coproporphyrin-dependent heme b biosynthesis. Catalyzes the oxidation of coproporphyrinogen III to coproporphyrin III. In Mycobacterium leprae (strain TN), this protein is Coproporphyrinogen III oxidase.